The sequence spans 2615 residues: Collagen alpha-5(VI) chain (2615 aa).

Residues 1–18 (MKILLIIFVLIIWTETLA) form the signal peptide. The nonhelical region stretch occupies residues 19–1394 (DQSPGPGPVY…TCCCTFCKCP (1376 aa)). 7 VWFA domains span residues 30 to 209 (DVVF…IKDV), 236 to 413 (DLVF…LKKL), 442 to 612 (DIHF…KNEV), 628 to 797 (DIMF…ERKL), 814 to 987 (DVVF…FTLV), 1005 to 1178 (DVIF…KKRI), and 1194 to 1376 (DIVV…KLSQ). Residues asparagine 201 and asparagine 260 are each glycosylated (N-linked (GlcNAc...) asparagine). An N-linked (GlcNAc...) asparagine glycan is attached at asparagine 835. Collagen-like domains are found at residues 1395–1446 (GIPG…GCPG), 1434–1490 (GPQG…KGDP), 1464–1520 (GDDG…PGQN), 1524–1580 (KGQK…TLGA), 1579–1629 (GAEG…LGKK), and 1674–1729 (GDAG…MAGQ). Residues 1395–1728 (GIPGPHGTRG…GQRGIKGMAG (334 aa)) form a triple-helical region region. The disordered stretch occupies residues 1404–1693 (GLQAMKGSQG…NPGIPGGPGP (290 aa)). Residues 1430 to 1432 (RGD) carry the Cell attachment site motif. A compositionally biased stretch (low complexity) spans 1511 to 1522 (PGDPGNPGQNNN). Composition is skewed to low complexity over residues 1601 to 1611 (SQGQKGPQGSP) and 1622 to 1641 (RPGL…LGPV). Positions 1729-2615 (QPVYSQCDLI…EDKEMEATDI (887 aa)) are nonhelical region. 3 consecutive VWFA domains span residues 1758-1965 (ELVF…MDVV), 1963-2154 (DVVF…AKFL), and 2291-2487 (DVAF…VKPF). N-linked (GlcNAc...) asparagine glycosylation occurs at asparagine 2509.

This sequence belongs to the type VI collagen family. In terms of assembly, trimers composed of three different chains: alpha-1(VI), alpha-2(VI), and alpha-3(VI) or alpha-5(VI) or alpha-6(VI). In terms of processing, prolines at the third position of the tripeptide repeating unit (G-X-Y) are hydroxylated in some or all of the chains. In terms of tissue distribution, expressed in skin, followed by lung, small intestine, colon and testis. In skin, it is expressed in the epidermis with strongest staining in suprabasal viable layers. In ATOD patients, it is absent in the most differentiated upper spinous and granular layers (at protein level).

It localises to the secreted. Its subcellular location is the extracellular space. The protein resides in the extracellular matrix. Collagen VI acts as a cell-binding protein. The polypeptide is Collagen alpha-5(VI) chain (COL6A5) (Homo sapiens (Human)).